Here is a 509-residue protein sequence, read N- to C-terminus: Protein MAIN-LIKE 1 (509 aa).

Positions 477-509 are disordered; sequence GYGKRRRRNEHTPTPNNGGGNDISSLLLQKEDS. Polar residues predominate over residues 488–503; the sequence is TPTPNNGGGNDISSLL.

Expressed in root tips, the shoot apical meristem (SAM), leaves, mature flowers and embryos.

It is found in the nucleus. Its function is as follows. Acts as an important factor for cell fate determination and maintenance throughout plant development. Required for the organization of the root apical meristem (RAM) and the shoot apical meristem (SAM). Required to maintain genome stability and cell division activity in meristematic cells. The sequence is that of Protein MAIN-LIKE 1 from Arabidopsis thaliana (Mouse-ear cress).